A 657-amino-acid polypeptide reads, in one-letter code: MRFDNASIVVYYCLIQMNIINLGILAHIDAGKTSVTENLLFASGATEKCGRVDNGDTITDSMDIEKRRGITVRASTTSIIWNGVKCNIIDTPGHMDFIAEVERTFKMLDGAVLILSAKEGIQAQTKLLFNTLQKLQIPTIIFINKIDRDGVNLERLYLDIKTNLSQDVLFMQTVVDGLVYPICSQTYIKEEYKEFVCNHDDNILERYLADSEISPADYWNTIIDLVAKAKVYPVLHGSAMFNIGINELLDAISSFILPPESVSNRLSAYLYKIEHDPKGHKRSFLKIIDGSLRLRDIVRINDSEKFIKIKNLKTIYQGREINVDEVGANDIAIVEDMEDFRIGDYLGTKPCLIQGLSHQHPALKSSVRPDRSEERSKVISALNTLWIEDPSLSFSINSYSDELEISLYGLTQKEIIQTLLEERFSVKVHFDEIKTIYKERPVKKVNKIIQIEVPPNPYWATIGLTLEPLPLGTGLQIESDISYGYLNHSFQNAVFEGIRMSCQSGLHGWEVTDLKVTFTQAEYYSPVSTPADFRQLTPYVFRLALQQSGVDILEPMLYFELQIPQAASSKAITDLQKMMSEIEDISCNNEWCHIKGKVPLNTSKDYASEVSSYTKGLGVFMVKPCGYQITKGDYSDNIRMNEKDKLLFMFQKSMSSK.

The region spanning M17 to E260 is the tr-type G domain. GTP contacts are provided by residues A26–T33, D90–H94, and N144–D147.

The protein belongs to the TRAFAC class translation factor GTPase superfamily. Classic translation factor GTPase family. TetM/TetO subfamily.

Functionally, abolishes the inhibitory effect of tetracycline on protein synthesis by non-covalently modifying ribosomes. Confers mild resistance to tetracycline when expressed in E.coli. The chain is Tetracycline resistance protein TetQ (tetQ) from Bacteroides fragilis.